The primary structure comprises 214 residues: Protein OPG176 (214 aa).

Belongs to the orthopoxvirus OPG176 family. In terms of assembly, tetramer. Interacts with host MYD88, TRF4, TICAM2 and MAL.

BCL2-like protein which disrupts the host immune response by inhibiting the TLR4 signaling pathway leading to NF-kappa-B activation. Acts close to the plasma membrane and targets several host TIR-domain containing adapter proteins including MYD88, TIRAP, TRIF and TICAM2. In turn, blocks the host NF-kappa-B and TRIF-mediated IRF3 activation. This chain is Protein OPG176 (OPG176), found in Homo sapiens (Human).